Reading from the N-terminus, the 121-residue chain is Large ribosomal subunit protein eL31 (121 aa).

It belongs to the eukaryotic ribosomal protein eL31 family.

The polypeptide is Large ribosomal subunit protein eL31 (RPL31) (Panax ginseng (Korean ginseng)).